We begin with the raw amino-acid sequence, 319 residues long: ATP-dependent 6-phosphofructokinase (319 aa).

An ATP-binding site is contributed by Gly11. ADP is bound at residue 21–25; it reads RAVVR. ATP contacts are provided by residues 72 to 73 and 102 to 105; these read RC and GDGS. Asp103 is a binding site for Mg(2+). Residue 125 to 127 participates in substrate binding; it reads TID. The active-site Proton acceptor is Asp127. Arg154 is a binding site for ADP. Substrate-binding positions include Arg162 and 169 to 171; that span reads MGR. ADP contacts are provided by residues 185–187, Arg211, and 213–215; these read GAE and KKH. Residues Glu222, Arg243, and 249-252 contribute to the substrate site; that span reads HIQR.

The protein belongs to the phosphofructokinase type A (PFKA) family. ATP-dependent PFK group I subfamily. Prokaryotic clade 'B1' sub-subfamily. As to quaternary structure, homotetramer. The cofactor is Mg(2+).

The protein resides in the cytoplasm. It carries out the reaction beta-D-fructose 6-phosphate + ATP = beta-D-fructose 1,6-bisphosphate + ADP + H(+). Its pathway is carbohydrate degradation; glycolysis; D-glyceraldehyde 3-phosphate and glycerone phosphate from D-glucose: step 3/4. Allosterically activated by ADP and other diphosphonucleosides, and allosterically inhibited by phosphoenolpyruvate. In terms of biological role, catalyzes the phosphorylation of D-fructose 6-phosphate to fructose 1,6-bisphosphate by ATP, the first committing step of glycolysis. This is ATP-dependent 6-phosphofructokinase from Halalkalibacterium halodurans (strain ATCC BAA-125 / DSM 18197 / FERM 7344 / JCM 9153 / C-125) (Bacillus halodurans).